We begin with the raw amino-acid sequence, 135 residues long: S-protein homolog 7 (135 aa).

An N-terminal signal peptide occupies residues 1-20 (MNNLFVLVIIIVLSAGSNNG).

Belongs to the plant self-incompatibility (S1) protein family.

It localises to the secreted. In Arabidopsis thaliana (Mouse-ear cress), this protein is S-protein homolog 7.